The sequence spans 774 residues: Ent-beyerene synthase KSL4, chloroplastic (774 aa).

The transit peptide at 1 to 35 directs the protein to the chloroplast; the sequence is MLLGSTNTLRISSHGKEWEGKTLTGMPLGKVNQRV. Mg(2+)-binding residues include Asp-525, Asp-529, Asn-668, Asp-669, Thr-672, and Glu-676. A DDXXD motif motif is present at residues 525–529; the sequence is DDFFD.

Belongs to the terpene synthase family. Requires Mg(2+) as cofactor.

The protein localises to the plastid. It localises to the chloroplast. The enzyme catalyses ent-copalyl diphosphate = ent-beyerene + diphosphate. It carries out the reaction ent-copalyl diphosphate = ent-atiserene + diphosphate. The catalysed reaction is ent-copalyl diphosphate = ent-kaur-16-ene + diphosphate. It participates in secondary metabolite biosynthesis; terpenoid biosynthesis. Functionally, diterpene cyclase involved in the biosynthesis of labdane-related diterpenoids (LRDs) natural products. Catalyzes the cyclization of ent-CDP into ent-beyerene as a major and ent-kaurene and ent-atiserene as minor products. This chain is Ent-beyerene synthase KSL4, chloroplastic, found in Ricinus communis (Castor bean).